The primary structure comprises 322 residues: Cysteine protease YopT (322 aa).

Active-site residues include Cys-139, His-258, and Asp-274.

This sequence belongs to the peptidase C58 family. Interacts with human ARHA.

It is found in the secreted. Functionally, cysteine protease, which is translocated into infected cells and plays a central role in pathogenesis by cleaving the C-terminus end of the human small GTPase RhoA/ARHA, a regulator of cytoskeleton. Once cleaved, ARHA loses its lipid modification, and is released from the cell membrane, leading to the subsequent disruption of actin cytoskeleton of the host cell. In Yersinia pseudotuberculosis serotype I (strain IP32953), this protein is Cysteine protease YopT (yopT).